Reading from the N-terminus, the 205-residue chain is ATP phosphoribosyltransferase (205 aa).

Belongs to the ATP phosphoribosyltransferase family. Short subfamily. In terms of assembly, heteromultimer composed of HisG and HisZ subunits.

It localises to the cytoplasm. The enzyme catalyses 1-(5-phospho-beta-D-ribosyl)-ATP + diphosphate = 5-phospho-alpha-D-ribose 1-diphosphate + ATP. It participates in amino-acid biosynthesis; L-histidine biosynthesis; L-histidine from 5-phospho-alpha-D-ribose 1-diphosphate: step 1/9. In terms of biological role, catalyzes the condensation of ATP and 5-phosphoribose 1-diphosphate to form N'-(5'-phosphoribosyl)-ATP (PR-ATP). Has a crucial role in the pathway because the rate of histidine biosynthesis seems to be controlled primarily by regulation of HisG enzymatic activity. This Nitratiruptor sp. (strain SB155-2) protein is ATP phosphoribosyltransferase.